Reading from the N-terminus, the 149-residue chain is Transcriptional repressor NrdR (149 aa).

Residues 3-34 (CPFCSENDTKVIDSRLVADGHQVRRRRQCLAC) fold into a zinc finger. In terms of domain architecture, ATP-cone spans 49 to 139 (PKVIKSNGNR…VYRSFEDIRE (91 aa)).

This sequence belongs to the NrdR family. Zn(2+) is required as a cofactor.

Functionally, negatively regulates transcription of bacterial ribonucleotide reductase nrd genes and operons by binding to NrdR-boxes. The chain is Transcriptional repressor NrdR from Vibrio parahaemolyticus serotype O3:K6 (strain RIMD 2210633).